A 362-amino-acid chain; its full sequence is Type II methyltransferase M.MamI (362 aa).

This sequence belongs to the N(4)/N(6)-methyltransferase family.

The enzyme catalyses a 2'-deoxyadenosine in DNA + S-adenosyl-L-methionine = an N(6)-methyl-2'-deoxyadenosine in DNA + S-adenosyl-L-homocysteine + H(+). A gamma subtype methylase that recognizes the double-stranded sequence 5'-GATNNNNATC-3', methylates A-? on both strands, and protects the DNA from cleavage by the MamI endonuclease. In Microbacterium ammoniaphilum, this protein is Type II methyltransferase M.MamI.